The sequence spans 341 residues: Probable GDP-mannose transporter 2 (341 aa).

Topologically, residues 1 to 11 (MSKHKHEWTES) are cytoplasmic. The helical transmembrane segment at 12 to 32 (VANSGPASILSYCASSILMTV) threads the bilayer. The Lumenal segment spans residues 33-46 (TNKFVVNLDNFNMN). The chain crosses the membrane as a helical span at residues 47 to 67 (FVMLFVQSLVCTVTLCILRIV). Topologically, residues 68–85 (GVANFRSLNRTDVKNWFP) are cytoplasmic. Residues 86-106 (ISLLLVLMIYTSLKSLQYLAV) form a helical membrane-spanning segment. Proline 107 is a topological domain (lumenal). A helical membrane pass occupies residues 108-128 (IYTIFKNLTIILIAYGEVLFF). At 129-139 (GGKVTSMELTS) the chain is on the cytoplasmic side. The chain crosses the membrane as a helical span at residues 140–160 (FIMMVLSSVVATWGDQQAIAI). Over 161–176 (KASSLEDLDQELVEST) the chain is Lumenal. A helical membrane pass occupies residues 177–197 (IFVLNPGYLWMFTNCISSALF). Topologically, residues 198–214 (VLIMRKRIRLTNFKDYD) are cytoplasmic. The chain crosses the membrane as a helical span at residues 215-235 (TMFYNNVLALPLLLVFSFIME). Topologically, residues 236–251 (DWSTKNLSVNLSADSL) are lumenal. N-linked (GlcNAc...) asparagine glycosylation is found at asparagine 241 and asparagine 245. The helical transmembrane segment at 252-272 (AAMVISGLMSVGISYCSGWCV) threads the bilayer. The Cytoplasmic portion of the chain corresponds to 273-278 (RVTSST). The helical transmembrane segment at 279–299 (TYSMVGALNKLPIALAGLVFF) threads the bilayer. At 300–303 (DAPK) the chain is on the lumenal side. The chain crosses the membrane as a helical span at residues 304–324 (NFLSFFSIFLGFLSGLLYAVA). The Cytoplasmic portion of the chain corresponds to 325–341 (KQKKIQQQKVLAATLEK).

Belongs to the TPT transporter family. SLC35D subfamily.

The protein resides in the golgi apparatus membrane. Its subcellular location is the cytoplasmic vesicle membrane. It localises to the endoplasmic reticulum membrane. In terms of biological role, involved in the import of GDP-mannose from the cytoplasm into the Golgi lumen. The chain is Probable GDP-mannose transporter 2 (HVG1) from Saccharomyces cerevisiae (strain Lalvin EC1118 / Prise de mousse) (Baker's yeast).